We begin with the raw amino-acid sequence, 171 residues long: Inosine/xanthosine triphosphatase (171 aa).

8 to 13 serves as a coordination point for substrate; that stretch reads TTNPAK. 2 residues coordinate Mg(2+): D38 and Q68.

The protein belongs to the YjjX NTPase family. Homodimer. Mg(2+) is required as a cofactor. It depends on Mn(2+) as a cofactor.

The catalysed reaction is XTP + H2O = XDP + phosphate + H(+). It catalyses the reaction ITP + H2O = IDP + phosphate + H(+). Phosphatase that hydrolyzes non-canonical purine nucleotides such as XTP and ITP to their respective diphosphate derivatives. Probably excludes non-canonical purines from DNA/RNA precursor pool, thus preventing their incorporation into DNA/RNA and avoiding chromosomal lesions. In Cronobacter sakazakii (strain ATCC BAA-894) (Enterobacter sakazakii), this protein is Inosine/xanthosine triphosphatase.